Here is a 263-residue protein sequence, read N- to C-terminus: Ribosomal RNA large subunit methyltransferase E (263 aa).

Positions 50, 52, 68, 84, and 109 each coordinate S-adenosyl-L-methionine. Lys149 functions as the Proton acceptor in the catalytic mechanism. The region spanning 196-254 is the TRAM domain; that stretch reads PLRKGDKFVVDIEKLGSSGDGAVLIEGFVVFVKEVEVGEKVRIKITDVKPNFAFADVAE.

Belongs to the class I-like SAM-binding methyltransferase superfamily. RNA methyltransferase RlmE family.

It localises to the cytoplasm. The catalysed reaction is uridine(2552) in 23S rRNA + S-adenosyl-L-methionine = 2'-O-methyluridine(2552) in 23S rRNA + S-adenosyl-L-homocysteine + H(+). Functionally, specifically methylates the uridine in position 2552 of 23S rRNA at the 2'-O position of the ribose in the fully assembled 50S ribosomal subunit. This is Ribosomal RNA large subunit methyltransferase E from Methanosarcina barkeri (strain Fusaro / DSM 804).